The sequence spans 197 residues: Imidazoleglycerol-phosphate dehydratase (197 aa).

The protein belongs to the imidazoleglycerol-phosphate dehydratase family.

It localises to the cytoplasm. It carries out the reaction D-erythro-1-(imidazol-4-yl)glycerol 3-phosphate = 3-(imidazol-4-yl)-2-oxopropyl phosphate + H2O. It participates in amino-acid biosynthesis; L-histidine biosynthesis; L-histidine from 5-phospho-alpha-D-ribose 1-diphosphate: step 6/9. The protein is Imidazoleglycerol-phosphate dehydratase of Nitrobacter hamburgensis (strain DSM 10229 / NCIMB 13809 / X14).